A 468-amino-acid polypeptide reads, in one-letter code: Uronate isomerase (468 aa).

Belongs to the metallo-dependent hydrolases superfamily. Uronate isomerase family.

It catalyses the reaction D-glucuronate = D-fructuronate. The enzyme catalyses aldehydo-D-galacturonate = keto-D-tagaturonate. It participates in carbohydrate metabolism; pentose and glucuronate interconversion. The polypeptide is Uronate isomerase (Marinomonas sp. (strain MWYL1)).